A 660-amino-acid polypeptide reads, in one-letter code: U-box domain-containing protein 13 (660 aa).

The interval 227-252 (DDNGEEQKVGVNSRSNGQTSTAASQK) is disordered. Positions 236–250 (GVNSRSNGQTSTAAS) are enriched in polar residues. Residues 255 to 329 (VIPDDFRCPI…AQWCEANDIE (75 aa)) enclose the U-box domain. 5 ARM repeats span residues 384 to 423 (ADNRVAIAEAGAIPLLVGLLSTPDSRIQEHSVTALLNLSI), 425 to 464 (ENNKGAIVSAGAIPGIVQVLKKGSMEARENAAATLFSLSV), 466 to 505 (DENKVTIGALGAIPPLVVLLNEGTQRGKKDAATALFNLCI), 507 to 546 (QGNKGKAIRAGVIPTLTRLLTEPGSGMVDEALAILAILSS), and 548 to 587 (PEGKAIIGSSDAVPSLVEFIRTGSPRNRENAAAVLVHLCS). Positions 631 to 660 (AEQQKETAVSQPEEEAEPTHPESTTEAADT) are disordered. Residues 651 to 660 (PESTTEAADT) show a composition bias toward polar residues.

In terms of assembly, binds to SD11, SD16, SD17, SD18, SD113, SD129 and SD25. In terms of processing, phosphorylated by SD1-6 and SD1-7.

It is found in the nucleus. Its subcellular location is the cytoplasm. It catalyses the reaction S-ubiquitinyl-[E2 ubiquitin-conjugating enzyme]-L-cysteine + [acceptor protein]-L-lysine = [E2 ubiquitin-conjugating enzyme]-L-cysteine + N(6)-ubiquitinyl-[acceptor protein]-L-lysine.. It participates in protein modification; protein ubiquitination. Functions as an E3 ubiquitin ligase. The chain is U-box domain-containing protein 13 (PUB13) from Arabidopsis thaliana (Mouse-ear cress).